We begin with the raw amino-acid sequence, 652 residues long: Zinc finger protein 503 (652 aa).

The segment covering 1 to 11 (MSTAPSLSALR) has biased composition (polar residues). The segment at 1 to 72 (MSTAPSLSAL…HAVPPSDPLR (72 aa)) is disordered. Residues 16-32 (SGGGGGGGGGGGSGGGS) are compositionally biased toward gly residues. Ser-107 carries the phosphoserine modification. Disordered regions lie at residues 126–283 (SQIG…GVPA) and 296–338 (INVD…SSVL). A compositionally biased stretch (low complexity) spans 135-144 (PSSKLSSVAS). Composition is skewed to gly residues over residues 145-157 (NGGGAGGAGNGAG) and 194-209 (GGGGGGGGGGGGGGGV). The residue at position 213 (Lys-213) is an N6-acetyllysine. Positions 221-230 (ATCQPFTPRT) are enriched in polar residues. Positions 231-244 (GSPSSSASACSPGG) are enriched in low complexity. Phosphoserine is present on residues Ser-235 and Ser-241. A compositionally biased stretch (basic and acidic residues) spans 254 to 263 (EGKDDKKDPE). Over residues 264 to 283 (AGGGGSSKGSGGASADGVPA) the composition is skewed to gly residues. Residues 314–336 (GSDCGGSSSSSSGSGPSAPTSSS) are compositionally biased toward low complexity. Residues 520 to 548 (HICNWVSANGPCDKRFATSEELLSHLRTH) form a C2H2-type zinc finger. The residue at position 642 (Arg-642) is an Omega-N-methylarginine.

It belongs to the Elbow/Noc family.

The protein resides in the nucleus. In terms of biological role, may function as a transcriptional repressor. The polypeptide is Zinc finger protein 503 (Znf503) (Mus musculus (Mouse)).